We begin with the raw amino-acid sequence, 223 residues long: MTRDRELQALLRLTAWLSPAFPIGSFAYSGGLERAVADGLVTDAALLAAWIGTLVGNGSVWNDAVLLAESHRQQAEAARLAEVAALAEALAGSRERHQETMLLGEAFLAAARAWPDEVFRRLPDKVAYPIAVGAVTGAHGIRPEKALAAFLHAYVSQAVSSGIRLGVAGQRDGVAILAGLEDHITEVARRAAASTLDDLGSATVQADIASLRHETQATRLFRS.

It belongs to the UreF family. In terms of assembly, ureD, UreF and UreG form a complex that acts as a GTP-hydrolysis-dependent molecular chaperone, activating the urease apoprotein by helping to assemble the nickel containing metallocenter of UreC. The UreE protein probably delivers the nickel.

It is found in the cytoplasm. Functionally, required for maturation of urease via the functional incorporation of the urease nickel metallocenter. The protein is Urease accessory protein UreF of Rhizobium johnstonii (strain DSM 114642 / LMG 32736 / 3841) (Rhizobium leguminosarum bv. viciae).